The primary structure comprises 1389 residues: DNA-directed RNA polymerase subunit beta'' (1389 aa).

4 residues coordinate Zn(2+): Cys-224, Cys-295, Cys-302, and Cys-305.

The protein belongs to the RNA polymerase beta' chain family. RpoC2 subfamily. In plastids the minimal PEP RNA polymerase catalytic core is composed of four subunits: alpha, beta, beta', and beta''. When a (nuclear-encoded) sigma factor is associated with the core the holoenzyme is formed, which can initiate transcription. Zn(2+) is required as a cofactor.

Its subcellular location is the plastid. The protein localises to the chloroplast. It carries out the reaction RNA(n) + a ribonucleoside 5'-triphosphate = RNA(n+1) + diphosphate. Functionally, DNA-dependent RNA polymerase catalyzes the transcription of DNA into RNA using the four ribonucleoside triphosphates as substrates. The protein is DNA-directed RNA polymerase subunit beta'' of Morus indica (Mulberry).